Consider the following 215-residue polypeptide: Deoxyribose-phosphate aldolase (215 aa).

The active-site Proton donor/acceptor is the aspartate 90. Lysine 152 serves as the catalytic Schiff-base intermediate with acetaldehyde. Lysine 181 serves as the catalytic Proton donor/acceptor.

Belongs to the DeoC/FbaB aldolase family. DeoC type 1 subfamily.

The protein resides in the cytoplasm. It carries out the reaction 2-deoxy-D-ribose 5-phosphate = D-glyceraldehyde 3-phosphate + acetaldehyde. It functions in the pathway carbohydrate degradation; 2-deoxy-D-ribose 1-phosphate degradation; D-glyceraldehyde 3-phosphate and acetaldehyde from 2-deoxy-alpha-D-ribose 1-phosphate: step 2/2. Its function is as follows. Catalyzes a reversible aldol reaction between acetaldehyde and D-glyceraldehyde 3-phosphate to generate 2-deoxy-D-ribose 5-phosphate. The protein is Deoxyribose-phosphate aldolase of Ureaplasma urealyticum serovar 10 (strain ATCC 33699 / Western).